The chain runs to 610 residues: MDLAAMKERQQRIRNFSIVAHIDHGKSTLADRILEMTDTISKREMKNQILDDMPLERERGITIKLNAVALTYHAQDGQDYIFHLIDTPGHVDFSYEVSRSLAACEGAILVVDATQGVEAQTLANTYLAIDNDLEILPVINKVDLPSADPEGTKKQIEDEIGLDTDEAVDISAKTGVNVDQVLEKIVQDIPAPTGDLEAPLKALIFDSKYDDYRGVVLSVRVKEGTVKKGDKIEFMNSKAVYEVAEVGINSPKPLARDFLMAGDVGYVTAAIKDIKDARVGDTITDANHPTDKPLAGYRQMQPMVYAGLYPTDNAKFNDLRDALEKLQLNDAALTFEPESSQALGFGFRCGFLGMLHMDVIQERLEREFDLDLITTAPSVTYHVNLHDGSTRNVENPAEMPDVTEIKSIEEPFVKASIMVPNDYVGAVMELCQRKRGQFDTMEYLSDTRVNVIYHIPLSEIIYDFFDRLKSSTRGYASLDYEIDDYRPSDLVKIDILLNGDRVDALSFISHRDFAEERGREIASKLKKIIPRQNFEIPVQAAIGSKIIARTNIKAYRKDVTARIHTGDPDRRAKLLDKQKRGKKRMKAVGKVEVPQAAFMAVLQTDEEIDN.

The tr-type G domain occupies 11 to 193 (QRIRNFSIVA…KIVQDIPAPT (183 aa)). Residues 23 to 28 (DHGKST) and 140 to 143 (NKVD) each bind GTP.

The protein belongs to the TRAFAC class translation factor GTPase superfamily. Classic translation factor GTPase family. LepA subfamily.

Its subcellular location is the cell membrane. The catalysed reaction is GTP + H2O = GDP + phosphate + H(+). Functionally, required for accurate and efficient protein synthesis under certain stress conditions. May act as a fidelity factor of the translation reaction, by catalyzing a one-codon backward translocation of tRNAs on improperly translocated ribosomes. Back-translocation proceeds from a post-translocation (POST) complex to a pre-translocation (PRE) complex, thus giving elongation factor G a second chance to translocate the tRNAs correctly. Binds to ribosomes in a GTP-dependent manner. The chain is Elongation factor 4 from Limosilactobacillus fermentum (strain NBRC 3956 / LMG 18251) (Lactobacillus fermentum).